A 394-amino-acid chain; its full sequence is Proliferation-associated protein 2G4 (394 aa).

Ser2 carries the post-translational modification N-acetylserine. Ser2 carries the phosphoserine modification. The tract at residues Ser2–Leu48 is necessary for nucleolar localization. The segment at Leu46 to Ala54 is RNA-binding. Lys298 is covalently cross-linked (Glycyl lysine isopeptide (Lys-Gly) (interchain with G-Cter in SUMO2)). The interval Leu301–Asp394 is necessary for nucleolar localization. Ser335 carries the post-translational modification Phosphoserine. Residues Leu358–Asp394 form a disordered region. Phosphoserine; by PKC/PRKCD is present on Ser361. Positions Ser361–Ser375 are interaction with RNA. Positions Lys365 to Ser375 are enriched in basic residues. Phosphothreonine is present on residues Thr366 and Thr386.

The protein belongs to the peptidase M24 family. Isoform 2 interacts with the cytoplasmic domain of non-phosphorylated ERBB3; the interaction requires PKC activity. Interacts with AR. Treatment with HRG leads to dissociation from ERBB3 and increases association with AR. Interacts with nucleolin/NCL. Component of a ribonucleoprotein complex containing at least PA2G4, NCL, TOP1, PABPC2, RPLP0, acetylated histone H1 (HIST1H1A or H1F1), histone H1 2/4, RPL4, RPL8, RPL15, RPL18, RPL18A, RPL21, RPL11, RPL12, RPL28, RPL27, RPLP2 and RPL24. Interacts with HDAC2. Interacts with RB1; the interaction is enhanced upon PA2G4 dephosphorylation. Interacts with AKT1. Isoform 1 and isoform 2 interact with RNF20. Isoform 2 interacts with HUWE1. Interacts with DNAJC21. In terms of processing, phosphorylated on serine and threonine residues. Phosphorylation is enhanced by HRG treatment. Basal phosphorylation is PKC-dependent and HRG-induced phosphorylation is predominantly PKC-independent. Phosphorylation at Ser-361 by PKC/PRKCD regulates its nucleolar localization. Isoform 2 is polyubiquitinated, leading to proteasomal degradation and phosphorylation by PKC/PRKCD enhances polyubiquitination. Widely expressed.

It is found in the cytoplasm. The protein localises to the nucleus. The protein resides in the nucleolus. May play a role in a ERBB3-regulated signal transduction pathway. Seems be involved in growth regulation. Acts a corepressor of the androgen receptor (AR) and is regulated by the ERBB3 ligand neuregulin-1/heregulin (HRG). Inhibits transcription of some E2F1-regulated promoters, probably by recruiting histone acetylase (HAT) activity. Binds RNA. Associates with 28S, 18S and 5.8S mature rRNAs, several rRNA precursors and probably U3 small nucleolar RNA. May be involved in regulation of intermediate and late steps of rRNA processing. May be involved in ribosome assembly. Mediates cap-independent translation of specific viral IRESs (internal ribosomal entry site). Together with PTBP1 is required for the translation initiation on the foot-and-mouth disease virus (FMDV) IRES. Regulates cell proliferation, differentiation, and survival. Isoform 1 suppresses apoptosis whereas isoform 2 promotes cell differentiation. This Mus musculus (Mouse) protein is Proliferation-associated protein 2G4 (Pa2g4).